The primary structure comprises 383 residues: Acetylornithine deacetylase (383 aa).

H80 provides a ligand contact to Zn(2+). D82 is an active-site residue. Position 112 (D112) interacts with Zn(2+). Residue E144 is part of the active site. Zn(2+) is bound by residues E145, E169, and H355.

Belongs to the peptidase M20A family. ArgE subfamily. Homodimer. It depends on Zn(2+) as a cofactor. Co(2+) serves as cofactor. Requires glutathione as cofactor.

Its subcellular location is the cytoplasm. The catalysed reaction is N(2)-acetyl-L-ornithine + H2O = L-ornithine + acetate. It functions in the pathway amino-acid biosynthesis; L-arginine biosynthesis; L-ornithine from N(2)-acetyl-L-ornithine (linear): step 1/1. Catalyzes the hydrolysis of the amide bond of N(2)-acetylated L-amino acids. Cleaves the acetyl group from N-acetyl-L-ornithine to form L-ornithine, an intermediate in L-arginine biosynthesis pathway, and a branchpoint in the synthesis of polyamines. The protein is Acetylornithine deacetylase of Escherichia coli (strain K12 / MC4100 / BW2952).